The following is a 328-amino-acid chain: Biotin synthase (328 aa).

The 230-residue stretch at 48–277 (FVGNEVHLCS…GKRITVCGGR (230 aa)) folds into the Radical SAM core domain. [4Fe-4S] cluster-binding residues include C66, C70, and C73. Residues S142 and C202 each coordinate [2Fe-2S] cluster.

It belongs to the radical SAM superfamily. Biotin synthase family. In terms of assembly, homodimer. Requires [4Fe-4S] cluster as cofactor. The cofactor is [2Fe-2S] cluster.

It carries out the reaction (4R,5S)-dethiobiotin + (sulfur carrier)-SH + 2 reduced [2Fe-2S]-[ferredoxin] + 2 S-adenosyl-L-methionine = (sulfur carrier)-H + biotin + 2 5'-deoxyadenosine + 2 L-methionine + 2 oxidized [2Fe-2S]-[ferredoxin]. The protein operates within cofactor biosynthesis; biotin biosynthesis; biotin from 7,8-diaminononanoate: step 2/2. Catalyzes the conversion of dethiobiotin (DTB) to biotin by the insertion of a sulfur atom into dethiobiotin via a radical-based mechanism. This is Biotin synthase from Citrifermentans bemidjiense (strain ATCC BAA-1014 / DSM 16622 / JCM 12645 / Bem) (Geobacter bemidjiensis).